Consider the following 1939-residue polypeptide: Myosin-4 (1939 aa).

In terms of domain architecture, Myosin N-terminal SH3-like spans 33–82; that stretch reads DAKTSVFVVDPKESYVKAIVQSREGGKVTAKTEAGATVTVKEDQVFSMNP. Phosphothreonine is present on residues Thr-64 and Thr-69. A Phosphoserine modification is found at Ser-79. The Myosin motor domain maps to 86–782; that stretch reads DKIEDMAMMT…LLGTLEEMRD (697 aa). Position 130 is an N6,N6,N6-trimethyllysine (Lys-130). 179-186 is a binding site for ATP; that stretch reads GESGAGKT. The residue at position 389 (Tyr-389) is a Phosphotyrosine. Thr-391 carries the phosphothreonine modification. At Ser-392 the chain carries Phosphoserine. Thr-419 carries the post-translational modification Phosphothreonine. A Phosphotyrosine modification is found at Tyr-424. Ser-625 carries the post-translational modification Phosphoserine. The segment at 659–681 is actin-binding; it reads LNKLMTNLRSTHPHFVRCIIPNE. The residue at position 757 (His-757) is a Pros-methylhistidine. Residues 761-775 are actin-binding; that stretch reads KFGHTKVFFKAGLLG. Thr-776 carries the post-translational modification Phosphothreonine. Residues 785–814 form the IQ domain; it reads LAQLITRTQAICRGFLMRVEFRKMMERRES. The stretch at 843–1939 forms a coiled coil; it reads LLKSAETEKE…EVHTKVISEE (1097 aa). Ser-1092, Ser-1162, and Ser-1237 each carry phosphoserine. A Phosphothreonine modification is found at Thr-1241. Ser-1243 bears the Phosphoserine mark. Phosphothreonine is present on Thr-1255. A Phosphoserine modification is found at Ser-1261. Position 1265 is a phosphothreonine (Thr-1265). Position 1278 is a phosphoserine (Ser-1278). Thr-1286 bears the Phosphothreonine mark. 5 positions are modified to phosphoserine: Ser-1288, Ser-1292, Ser-1303, Ser-1306, and Ser-1413. The residue at position 1464 (Tyr-1464) is a Phosphotyrosine. Thr-1467 carries the phosphothreonine modification. Ser-1474 bears the Phosphoserine mark. Tyr-1492 is subject to Phosphotyrosine. Position 1495 is a phosphoserine (Ser-1495). At Thr-1501 the chain carries Phosphothreonine. Ser-1514 is subject to Phosphoserine. Thr-1517 carries the phosphothreonine modification. Ser-1542, Ser-1547, Ser-1554, Ser-1574, Ser-1600, Ser-1603, Ser-1714, and Ser-1726 each carry phosphoserine. 2 positions are modified to phosphothreonine: Thr-1730 and Thr-1736. Ser-1739 is modified (phosphoserine).

Belongs to the TRAFAC class myosin-kinesin ATPase superfamily. Myosin family. As to quaternary structure, muscle myosin is a hexameric protein that consists of 2 heavy chain subunits (MHC), 2 alkali light chain subunits (MLC) and 2 regulatory light chain subunits (MLC-2).

The protein localises to the cytoplasm. It localises to the myofibril. Functionally, muscle contraction. This chain is Myosin-4 (MYH4), found in Homo sapiens (Human).